Reading from the N-terminus, the 579-residue chain is YTH domain-containing family protein 2 (579 aa).

A disordered region spans residues 1-45; sequence MSASSLLEQRPKGQGNKVQNGSVHQKDGLNDDDFEPYLSPQARPN. Residue Ser-2 is modified to N-acetylserine. 6 positions are modified to phosphoserine: Ser-2, Ser-4, Ser-5, Ser-22, Ser-39, and Ser-196. The interval 2-384 is localization to mRNA processing bodies (P-bodies); sequence SASSLLEQRP…QAGSGSTPSE (383 aa). The interval 247 to 387 is disordered; the sequence is AKQQPKLKTK…SGSTPSEPHP (141 aa). A compositionally biased stretch (polar residues) spans 291-316; it reads ALVQNIGQPTQGSPQHVGQQANNSPP. The segment covering 337–349 has biased composition (low complexity); that stretch reads AQLSVQQQAAQPT. A Phosphoserine modification is found at Ser-359. Over residues 359-371 the composition is skewed to gly residues; sequence SGFGHNGVDGNGV. The span at 372–383 shows a compositional bias: polar residues; sequence GQSQAGSGSTPS. Positions 385–579 are interaction with m6A-containing mRNAs; sequence PHPVLEKLRS…VKKERQGRGK (195 aa). Ser-394 is modified (phosphoserine). Residues 410–544 enclose the YTH domain; that stretch reads GRVFIIKSYS…EKAKQVLKII (135 aa). Residues 416–418, Asp-422, 432–433, Asn-462, Trp-486, and Trp-491 contribute to the RNA site; these read KSY and WC.

It belongs to the YTHDF family. YTHDF2 subfamily. As to quaternary structure, interacts with CNOT1; interaction is direct and promotes recruitment of the CCR4-NOT complex. Interacts with YTHDF3. Interacts with RIDA/HRSP12; interaction leads to recruitment of the ribonuclease P/MRP complex. Post-translationally, ubiquitinated by the SCF(SKP2) complex, leading to its degradation.

It is found in the cytoplasm. The protein resides in the cytosol. Its subcellular location is the P-body. The protein localises to the stress granule. It localises to the nucleus. Specifically recognizes and binds N6-methyladenosine (m6A)-containing RNAs, and regulates their stability. M6A is a modification present at internal sites of mRNAs and some non-coding RNAs and plays a role in mRNA stability and processing. Acts as a regulator of mRNA stability by promoting degradation of m6A-containing mRNAs via interaction with the CCR4-NOT and ribonuclease P/MRP complexes, depending on the context. The YTHDF paralogs (YTHDF1, YTHDF2 and YTHDF3) share m6A-containing mRNAs targets and act redundantly to mediate mRNA degradation and cellular differentiation. M6A-containing mRNAs containing a binding site for RIDA/HRSP12 (5'-GGUUC-3') are preferentially degraded by endoribonucleolytic cleavage: cooperative binding of RIDA/HRSP12 and YTHDF2 to transcripts leads to recruitment of the ribonuclease P/MRP complex. Other m6A-containing mRNAs undergo deadenylation via direct interaction between YTHDF2 and CNOT1, leading to recruitment of the CCR4-NOT and subsequent deadenylation of m6A-containing mRNAs. Required maternally to regulate oocyte maturation: probably acts by binding to m6A-containing mRNAs, thereby regulating maternal transcript dosage during oocyte maturation, which is essential for the competence of oocytes to sustain early zygotic development. Also required during spermatogenesis: regulates spermagonial adhesion by promoting degradation of m6A-containing transcripts coding for matrix metallopeptidases. Also involved in hematopoietic stem cells specification by binding to m6A-containing mRNAs, leading to promote their degradation. Also acts as a regulator of neural development by promoting m6A-dependent degradation of neural development-related mRNA targets. Inhibits neural specification of induced pluripotent stem cells by binding to methylated neural-specific mRNAs and promoting their degradation, thereby restraining neural differentiation. Regulates circadian regulation of hepatic lipid metabolism: acts by promoting m6A-dependent degradation of PPARA transcripts. Regulates the innate immune response to infection by inhibiting the type I interferon response: acts by binding to m6A-containing IFNB transcripts and promoting their degradation. May also act as a promoter of cap-independent mRNA translation following heat shock stress: upon stress, relocalizes to the nucleus and specifically binds mRNAs with some m6A methylation mark at their 5'-UTR, protecting demethylation of mRNAs by FTO, thereby promoting cap-independent mRNA translation. Regulates mitotic entry by promoting the phase-specific m6A-dependent degradation of WEE1 transcripts. Promotes formation of phase-separated membraneless compartments, such as P-bodies or stress granules, by undergoing liquid-liquid phase separation upon binding to mRNAs containing multiple m6A-modified residues: polymethylated mRNAs act as a multivalent scaffold for the binding of YTHDF proteins, juxtaposing their disordered regions and thereby leading to phase separation. The resulting mRNA-YTHDF complexes then partition into different endogenous phase-separated membraneless compartments, such as P-bodies, stress granules or neuronal RNA granules. May also recognize and bind RNAs modified by C5-methylcytosine (m5C) and act as a regulator of rRNA processing. In Macaca fascicularis (Crab-eating macaque), this protein is YTH domain-containing family protein 2.